The sequence spans 495 residues: UDP-N-acetylmuramate--L-alanine ligase (495 aa).

122–128 (GTHGKTT) contacts ATP.

This sequence belongs to the MurCDEF family.

It is found in the cytoplasm. The catalysed reaction is UDP-N-acetyl-alpha-D-muramate + L-alanine + ATP = UDP-N-acetyl-alpha-D-muramoyl-L-alanine + ADP + phosphate + H(+). It participates in cell wall biogenesis; peptidoglycan biosynthesis. Cell wall formation. The polypeptide is UDP-N-acetylmuramate--L-alanine ligase (Mycobacterium leprae (strain TN)).